The chain runs to 476 residues: Glycogen synthase (476 aa).

Position 15 (Lys-15) interacts with ADP-alpha-D-glucose.

It belongs to the glycosyltransferase 1 family. Bacterial/plant glycogen synthase subfamily.

The catalysed reaction is [(1-&gt;4)-alpha-D-glucosyl](n) + ADP-alpha-D-glucose = [(1-&gt;4)-alpha-D-glucosyl](n+1) + ADP + H(+). It functions in the pathway glycan biosynthesis; glycogen biosynthesis. Its function is as follows. Synthesizes alpha-1,4-glucan chains using ADP-glucose. The protein is Glycogen synthase of Bacillus cereus (strain ATCC 10987 / NRS 248).